Consider the following 855-residue polypeptide: Leucine--tRNA ligase (855 aa).

The 'HIGH' region signature appears at 42–52 (PYPSGSLHVGH). The interval 292-311 (SEMDRTAEDKPKKGIPTGGK) is disordered. Over residues 293-303 (EMDRTAEDKPK) the composition is skewed to basic and acidic residues. The short motif at 614–618 (KMSKS) is the 'KMSKS' region element. Lysine 617 lines the ATP pocket.

The protein belongs to the class-I aminoacyl-tRNA synthetase family.

The protein localises to the cytoplasm. It catalyses the reaction tRNA(Leu) + L-leucine + ATP = L-leucyl-tRNA(Leu) + AMP + diphosphate. This is Leucine--tRNA ligase from Acaryochloris marina (strain MBIC 11017).